Reading from the N-terminus, the 118-residue chain is DNA-binding protein inhibitor ID-3-A (118 aa).

Positions 32 to 84 constitute a bHLH domain; the sequence is SHKGPGMDEPMGLLYDMNGCYSKLKELVPGIPQGSKLSQVEILQHVIDYIFDL.

As to quaternary structure, homodimer. Heterodimer with other HLH proteins. Interacts (via HLH domain) with the bHLH protein hes4/hairy2 (via Orange domain). Interacts with stat3. At gastrula stage, expressed in all three germ layers, but becomes localized to discrete domains of the developing nervous system during neurulation, including the anterior neural plate, cement gland, eye anlagen, otic placode and both cranial and trunk premigratory and early migratory neural crest cells. Also expressed in the most dorsal and ventral portions of the myotome, the developing heart and anterior blood islets, and in the tail fin mesenchyme. Expressed at a low level in limbs, with expression decreasing as limbs develop, but expressed at a high level in blastemas (regenerated limbs), where expression is localized to both the blastermal epidermis and mesenchyme. Widely expressed in adults including the liver and heart.

Its subcellular location is the nucleus. Transcriptional regulator (lacking a basic DNA binding domain) which negatively regulates the basic helix-loop-helix (bHLH) transcription factors by forming heterodimers and inhibiting their DNA binding and transcriptional activity. Influences cell fate decisions in the embryo by sequestering and blocking the activity of the bHLH transcription factors that control these decisions. Inhibits the binding of myogenic bHLH-containing complexes to E-box DNA, thereby preventing activation of muscle-specific target genes. Also inhibits the activity of neurogenic factor neurod1/neuroD. Plays a role in cell cycle progression and survival of neural crest progenitors; binding to either hes4-B/hairy2b or stat3 blocks the formation of transcription factor complexes and the repressor function of hes4-B/hairy2B, to allow neural crest progenitors to differentiate. May play a role in the regulation of the circadian rhythm. This chain is DNA-binding protein inhibitor ID-3-A (id3-a), found in Xenopus laevis (African clawed frog).